A 154-amino-acid polypeptide reads, in one-letter code: Ribonuclease P protein subunit p21 (154 aa).

A2 carries the post-translational modification N-acetylalanine. Zn(2+) contacts are provided by C62, C65, C92, and C95. The disordered stretch occupies residues 112–154; the sequence is DRPEAQLGNQADSKPLQPLPNTAHSISDHLPEEKMQIQGSSDQ. Residues 137 to 146 show a composition bias toward basic and acidic residues; it reads ISDHLPEEKM.

The protein belongs to the eukaryotic/archaeal RNase P protein component 4 family. As to quaternary structure, RNase P consists of a catalytic RNA moiety and about 10 protein subunits; POP1, POP4, POP5, POP7, RPP14, RPP21, RPP25, RPP30, RPP38 and RPP40. Within the RNase P complex, POP1, POP7 and RPP25 form the 'finger' subcomplex, POP5, RPP14, RPP40 and homodimeric RPP30 form the 'palm' subcomplex, and RPP21, POP4 and RPP38 form the 'wrist' subcomplex. All subunits of the RNase P complex interact with the catalytic RNA.

It localises to the nucleus. The protein resides in the nucleolus. In terms of biological role, component of ribonuclease P, a ribonucleoprotein complex that generates mature tRNA molecules by cleaving their 5'-ends. In Macaca mulatta (Rhesus macaque), this protein is Ribonuclease P protein subunit p21 (RPP21).